The primary structure comprises 691 residues: Methionine--tRNA ligase (691 aa).

The 'HIGH' region signature appears at 14–24 (PYANGPFHLGH). C148, C151, C161, and C164 together coordinate Zn(2+). The short motif at 344–348 (KMSKS) is the 'KMSKS' region element. K347 contributes to the ATP binding site. Residues 585–691 (DFDRVDLRVA…PGAKPGMRVR (107 aa)) form the tRNA-binding domain.

This sequence belongs to the class-I aminoacyl-tRNA synthetase family. MetG type 1 subfamily. As to quaternary structure, homodimer. It depends on Zn(2+) as a cofactor.

It localises to the cytoplasm. The catalysed reaction is tRNA(Met) + L-methionine + ATP = L-methionyl-tRNA(Met) + AMP + diphosphate. Is required not only for elongation of protein synthesis but also for the initiation of all mRNA translation through initiator tRNA(fMet) aminoacylation. The chain is Methionine--tRNA ligase from Verminephrobacter eiseniae (strain EF01-2).